Consider the following 214-residue polypeptide: External core antigen (214 aa).

The first 19 residues, 1–19, serve as a signal peptide directing secretion; that stretch reads MQLFHLCLIISCTCPTVQA. The segment at 25 to 27 is HBEAG; it reads GWL. The segment at 165-214 is disordered; it reads NAPILSTLPETTVVRRRDRGRSPRRRTPSPRRRRSQSPRRRRSQSRESQC. The span at 178–207 shows a compositional bias: basic residues; that stretch reads VRRRDRGRSPRRRTPSPRRRRSQSPRRRRS. The 1; half-length repeat unit spans residues 186 to 192; it reads SPRRRTP. Residues 186 to 208 are 3 X 8 AA repeats of S-P-R-R-R-R-S-Q; it reads SPRRRTPSPRRRRSQSPRRRRSQ. A propeptide spanning residues 186–214 is cleaved from the precursor; that stretch reads SPRRRTPSPRRRRSQSPRRRRSQSRESQC. A run of 2 repeats spans residues 193 to 200 and 201 to 208.

This sequence belongs to the orthohepadnavirus precore antigen family. Homodimerizes. Post-translationally, phosphorylated. Cleaved by host furin.

Its subcellular location is the secreted. The protein localises to the host nucleus. Functionally, may regulate immune response to the intracellular capsid in acting as a T-cell tolerogen, by having an immunoregulatory effect which prevents destruction of infected cells by cytotoxic T-cells. This immune regulation may predispose to chronicity during perinatal infections and prevent severe liver injury during adult infections. The polypeptide is External core antigen (Hepatitis B virus genotype A2 subtype adw2 (isolate Germany/991/1990) (HBV-A)).